The primary structure comprises 607 residues: UvrABC system protein C (607 aa).

Residues 16–94 (GRPGVYRMFD…IKEWRPPYNI (79 aa)) form the GIY-YIG domain. The 36-residue stretch at 203–238 (NALTDELSGAMEQAASTLDFERAAELRDQISLLRRV) folds into the UVR domain.

It belongs to the UvrC family. Interacts with UvrB in an incision complex.

Its subcellular location is the cytoplasm. Functionally, the UvrABC repair system catalyzes the recognition and processing of DNA lesions. UvrC both incises the 5' and 3' sides of the lesion. The N-terminal half is responsible for the 3' incision and the C-terminal half is responsible for the 5' incision. This chain is UvrABC system protein C, found in Pseudomonas fluorescens (strain SBW25).